Reading from the N-terminus, the 436-residue chain is 3-ketoacyl-CoA thiolase (436 aa).

Residue cysteine 99 is the Acyl-thioester intermediate of the active site. Catalysis depends on proton acceptor residues histidine 392 and cysteine 422.

Belongs to the thiolase-like superfamily. Thiolase family. Heterotetramer of two alpha chains (FadJ) and two beta chains (FadI).

Its subcellular location is the cytoplasm. The enzyme catalyses an acyl-CoA + acetyl-CoA = a 3-oxoacyl-CoA + CoA. Its pathway is lipid metabolism; fatty acid beta-oxidation. Its function is as follows. Catalyzes the final step of fatty acid oxidation in which acetyl-CoA is released and the CoA ester of a fatty acid two carbons shorter is formed. The protein is 3-ketoacyl-CoA thiolase of Shewanella piezotolerans (strain WP3 / JCM 13877).